The primary structure comprises 551 residues: Peptidyl-prolyl cis-trans isomerase-like 4 (551 aa).

The 185-residue stretch at 1 to 185 (MSVLLETSLG…RDIRIRHVVV (185 aa)) folds into the PPIase cyclophilin-type domain. Residues 54–88 (GDPSNTGKGGASIWSQLPSTSQDSSTSTYFTPESS) are disordered. Polar residues predominate over residues 66 to 88 (IWSQLPSTSQDSSTSTYFTPESS). Positions 262-340 (NILFVCKLNP…RRIWVDFSQS (79 aa)) constitute an RRM domain. Positions 352 to 551 (RNAGSDAPRA…RQRSRDGSRR (200 aa)) are disordered. Basic and acidic residues-rich tracts occupy residues 384-397 (KRGD…RDQP) and 408-454 (SRQD…SHRD). Residues 455–464 (HERHHLSRHV) are compositionally biased toward basic residues. The span at 465-551 (RPSDEGESKC…RQRSRDGSRR (87 aa)) shows a compositional bias: basic and acidic residues.

This sequence belongs to the cyclophilin-type PPIase family. PPIL4 subfamily.

It localises to the nucleus. The catalysed reaction is [protein]-peptidylproline (omega=180) = [protein]-peptidylproline (omega=0). In terms of biological role, PPIases accelerate the folding of proteins. It catalyzes the cis-trans isomerization of proline imidic peptide bonds in oligopeptides. This is Peptidyl-prolyl cis-trans isomerase-like 4 (CYP6) from Mycosarcoma maydis (Corn smut fungus).